A 425-amino-acid polypeptide reads, in one-letter code: Tyrosine--tRNA ligase (425 aa).

Tyr37 is an L-tyrosine binding site. A 'HIGH' region motif is present at residues 42-51; it reads PTADSLHLGH. L-tyrosine is bound by residues Tyr175 and Gln179. The 'KMSKS' region signature appears at 235 to 239; sequence KFGKT. Lys238 contacts ATP. The S4 RNA-binding domain occupies 357–414; sequence ADLQQALVSAELVPSRGQARTMISSNAVTINGEKQANPEYIFSASDRLFDRYTLLRRG.

Belongs to the class-I aminoacyl-tRNA synthetase family. TyrS type 1 subfamily. As to quaternary structure, homodimer.

Its subcellular location is the cytoplasm. It catalyses the reaction tRNA(Tyr) + L-tyrosine + ATP = L-tyrosyl-tRNA(Tyr) + AMP + diphosphate + H(+). Catalyzes the attachment of tyrosine to tRNA(Tyr) in a two-step reaction: tyrosine is first activated by ATP to form Tyr-AMP and then transferred to the acceptor end of tRNA(Tyr). The polypeptide is Tyrosine--tRNA ligase (Pectobacterium atrosepticum (strain SCRI 1043 / ATCC BAA-672) (Erwinia carotovora subsp. atroseptica)).